The chain runs to 201 residues: Probable cobalt-precorrin-6B C(15)-methyltransferase (decarboxylating) (201 aa).

S-adenosyl-L-methionine contacts are provided by residues Thr28, 52 to 56 (GTGTG), Asp76, and Ala105.

This sequence belongs to the methyltransferase superfamily. Archaeal-type CbiT family.

It catalyses the reaction Co-precorrin-6B + S-adenosyl-L-methionine = Co-precorrin-7 + S-adenosyl-L-homocysteine + CO2. Its pathway is cofactor biosynthesis; adenosylcobalamin biosynthesis; cob(II)yrinate a,c-diamide from sirohydrochlorin (anaerobic route): step 8/10. In terms of biological role, catalyzes the methylation of C-15 in cobalt-precorrin-6B followed by the decarboxylation of C-12 to form cobalt-precorrin-7. This Thermoplasma volcanium (strain ATCC 51530 / DSM 4299 / JCM 9571 / NBRC 15438 / GSS1) protein is Probable cobalt-precorrin-6B C(15)-methyltransferase (decarboxylating).